A 291-amino-acid chain; its full sequence is 3-hydroxy-5-phosphonooxypentane-2,4-dione thiolase (291 aa).

Lys203 serves as the catalytic Schiff-base intermediate with substrate.

The protein belongs to the DeoC/FbaB aldolase family. As to quaternary structure, homodecamer.

It is found in the cytoplasm. The catalysed reaction is dihydroxyacetone phosphate + acetyl-CoA = 3-hydroxy-2,4-dioxopentyl phosphate + CoA. Involved in the degradation of phospho-AI-2, thereby terminating induction of the lsr operon and closing the AI-2 signaling cycle. Catalyzes the transfer of an acetyl moiety from 3-hydroxy-5-phosphonooxypentane-2,4-dione to CoA to form glycerone phosphate and acetyl-CoA. This chain is 3-hydroxy-5-phosphonooxypentane-2,4-dione thiolase, found in Yersinia pestis bv. Antiqua (strain Antiqua).